The sequence spans 522 residues: Nif-specific regulatory protein (522 aa).

The segment at 1–184 (MNATIPQRSA…AQTVRLVVNI (184 aa)) is a domain. The region spanning 37-178 (QIDELLEQVL…IVANLLAQTV (142 aa)) is the GAF domain. The Sigma-54 factor interaction domain occupies 211 to 439 (VVGHTPTMRR…LENCLERSAI (229 aa)). ATP-binding positions include 239–246 (GESGTGKE) and 302–311 (ADGGTLFLDE). Residues 440–479 (MSEDGTITRDVVSLTGVDNESPPLAAPLPEVNLADETLDD) form an inter-domain linker region. Residues 480–522 (RERVIAALEQAGWVQAKAARLLGMTPRQIAYRIQTLNIHMRKI) are C-terminal DNA-binding domain. The segment at residues 494–513 (QAKAARLLGMTPRQIAYRIQ) is a DNA-binding region (H-T-H motif).

Interacts with sigma-54.

Functionally, required for activation of most nif operons, which are directly involved in nitrogen fixation. The polypeptide is Nif-specific regulatory protein (nifA) (Azotobacter vinelandii).